The following is a 114-amino-acid chain: Large ribosomal subunit protein bL19 (114 aa).

This sequence belongs to the bacterial ribosomal protein bL19 family.

In terms of biological role, this protein is located at the 30S-50S ribosomal subunit interface and may play a role in the structure and function of the aminoacyl-tRNA binding site. In Acidithiobacillus ferrooxidans (strain ATCC 23270 / DSM 14882 / CIP 104768 / NCIMB 8455) (Ferrobacillus ferrooxidans (strain ATCC 23270)), this protein is Large ribosomal subunit protein bL19.